A 104-amino-acid polypeptide reads, in one-letter code: Evasin P1174 (104 aa).

Residues 1-27 form the signal peptide; the sequence is LKTFCLFLQIAVFIALGIQIFLCGTDA. 3 disulfides stabilise this stretch: cysteine 40-cysteine 59, cysteine 44-cysteine 61, and cysteine 55-cysteine 72. N-linked (GlcNAc...) asparagine glycosylation is found at asparagine 43, asparagine 49, and asparagine 58. The disordered stretch occupies residues 85–104; it reads KPTSEEIADASPRPKETNSH.

Its subcellular location is the secreted. In terms of biological role, salivary chemokine-binding protein which binds to host chemokines CXCL1 and CXCL8. In Ixodes ricinus (Common tick), this protein is Evasin P1174.